Here is a 388-residue protein sequence, read N- to C-terminus: Pepsin A (388 aa).

Residues 1–15 form the signal peptide; sequence MKWLLLLGLVALSEC. Positions 16–62 are cleaved as a propeptide — activation peptide; that stretch reads IIYKVPLVRKKSLRRNLSEHGLLKDFLKKHNRNPASKYFPQTEAPTL. The 310-residue stretch at 76-385 folds into the Peptidase A1 domain; sequence YFGTIGIGTP…DRANNQVGLA (310 aa). Asp-94 is an active-site residue. Cys-107 and Cys-112 form a disulfide bridge. Phosphoserine is present on Ser-130. A disulfide bridge connects residues Cys-268 and Cys-272. The active site involves Asp-277. Cys-311 and Cys-344 are oxidised to a cystine.

Belongs to the peptidase A1 family.

Its subcellular location is the secreted. The catalysed reaction is Preferential cleavage: hydrophobic, preferably aromatic, residues in P1 and P1' positions. Cleaves 1-Phe-|-Val-2, 4-Gln-|-His-5, 13-Glu-|-Ala-14, 14-Ala-|-Leu-15, 15-Leu-|-Tyr-16, 16-Tyr-|-Leu-17, 23-Gly-|-Phe-24, 24-Phe-|-Phe-25 and 25-Phe-|-Tyr-26 bonds in the B chain of insulin.. In terms of biological role, shows particularly broad specificity; although bonds involving phenylalanine and leucine are preferred, many others are also cleaved to some extent. This is Pepsin A (PGA) from Macaca mulatta (Rhesus macaque).